A 130-amino-acid polypeptide reads, in one-letter code: MTTSSYFLLVALGLLLYVCQSSFGGEHVCGSNQPNHPNGKCGSKMADYLEEQCEEEEAAHGGTNDARATTGRALSLSKRRGFLSMLKRRGKRNEASPLQRAGRGIVCECCKNHCTDEEFTEYCPHVTESG.

The signal sequence occupies residues methionine 1 to serine 21. Cystine bridges form between cysteine 29–cysteine 107, cysteine 41–cysteine 110, cysteine 53–cysteine 123, and cysteine 109–cysteine 114. The residue at position 34 (proline 34) is a 4-hydroxyproline; partial. Positions alanine 59–arginine 92 are cleaved as a propeptide — c peptide. Glutamate 118 is subject to 4-carboxyglutamate; partial. Position 129 is a serine amide (serine 129).

This sequence belongs to the insulin family. As to quaternary structure, heterodimer of A and B chains; disulfide-linked. Expressed by the venom gland.

The protein localises to the secreted. Functionally, this venom insulin facilitates prey capture by rapidly inducing hypoglycemic shock. Intraperitoneal injection of this peptide into zebrafish lowers blood glucose with the same potency than human insulin. In vivo, when applied to water, this peptide reduces overall locomotor activity of zebrafish larvae, observed as a significant decrease in the percentage of time spent swimming and movement frequency. In Conus marmoreus (Marble cone), this protein is Con-Ins M1.